The sequence spans 513 residues: Calcium-dependent protein kinase 2 (513 aa).

A lipid anchor (N-myristoyl glycine) is attached at Gly-2. The Protein kinase domain maps to 72 to 326 (YIIDEKLGQG…IEEALNHPWI (255 aa)). ATP-binding positions include 78 to 86 (LGQGTYGCV) and Lys-101. Asp-192 serves as the catalytic Proton acceptor. A J domain autoinhibitory motif motif is present at residues 345-353 (NLKNFKKEN). Positions 345–380 (NLKNFKKENELKKIALTIIAKHLCDVEINNLRNIFI) are j domain. Positions 354–363 (ELKKIALTII) match the J domain EF-hand interaction motif motif. 4 EF-hand domains span residues 370–405 (VEIN…IGYQ), 406–441 (KIPP…KQTY), 442–477 (LKKE…DDIE), and 480–513 (LIDK…SKKK). Positions 383, 385, 387, 389, and 394 each coordinate Ca(2+). Ca(2+)-binding residues include Asp-455, Asp-457, Asn-459, Lys-461, Glu-466, Asp-493, Asn-495, Asp-497, Glu-499, and Glu-504.

The protein belongs to the protein kinase superfamily. Ser/Thr protein kinase family. CDPK subfamily. As to quaternary structure, monomer. Requires Mg(2+) as cofactor. In terms of processing, myristoylated; myristoylation may target it to different subcellular compartments. Autophosphorylated in vitro.

The enzyme catalyses L-seryl-[protein] + ATP = O-phospho-L-seryl-[protein] + ADP + H(+). It carries out the reaction L-threonyl-[protein] + ATP = O-phospho-L-threonyl-[protein] + ADP + H(+). With respect to regulation, activated by calcium. Upon calcium binding to the EF-hand domains, the C-terminus of the junction domain (J domain) undergoes a conformational change which results in the dissociation of the pseudo-substrate inhibitory motif from the catalytic domain. This, in turn, may facilitate the autophosphorylation of the activation loop at Thr-232, which leads to the kinase activation. In terms of biological role, calcium-dependent protein kinase which acts as a sensor and effector of intracellular Ca(2+) levels probably in part downstream of cGMP-activated PKG kinase. During male gametogenesis in the mosquito gut, required for male exflagellation, possibly by regulating male gamete exit from the host erythrocytes. Not required for asexual blood stage proliferation. The polypeptide is Calcium-dependent protein kinase 2 (Plasmodium falciparum (isolate K1 / Thailand)).